The primary structure comprises 397 residues: Geranylgeranyl pyrophosphate synthase AN1592 (397 aa).

The interval 1–67 (MSPPLDSALE…SHDSSASSNI (67 aa)) is disordered. Basic and acidic residues predominate over residues 13 to 42 (SEYKETAFPRTEKDPSQYKEHDLVTPEKEI). Positions 52–67 (SHSSHGSHDSSASSNI) are enriched in low complexity. 3 residues coordinate isopentenyl diphosphate: Lys120, Arg123, and His152. Positions 159 and 163 each coordinate Mg(2+). Arg168 is a dimethylallyl diphosphate binding site. Arg169 contacts isopentenyl diphosphate. Lys247, Thr248, and Gln281 together coordinate dimethylallyl diphosphate. Position 284 (Asp284) interacts with Mg(2+). Residues Asn288, Lys298, and Lys308 each contribute to the dimethylallyl diphosphate site.

This sequence belongs to the FPP/GGPP synthase family. It depends on Mg(2+) as a cofactor.

It catalyses the reaction isopentenyl diphosphate + dimethylallyl diphosphate = (2E)-geranyl diphosphate + diphosphate. The catalysed reaction is isopentenyl diphosphate + (2E)-geranyl diphosphate = (2E,6E)-farnesyl diphosphate + diphosphate. It carries out the reaction isopentenyl diphosphate + (2E,6E)-farnesyl diphosphate = (2E,6E,10E)-geranylgeranyl diphosphate + diphosphate. Its pathway is secondary metabolite biosynthesis; terpenoid biosynthesis. Geranylgeranyl pyrophosphate synthase; part of the gene cluster that mediates the biosynthesis of the diterpene ent-pimara-8(14),15-diene (PD). Within the cluster, the HMG-CoA reductase AN1593 functions in the mevalonate pathway, which produces isoprenoid precursors. The geranylgeranyl pyrophosphate (GGPP) synthase AN1592 is needed in the formation of GGPP, the precursor for diterpenes. Lastly, the pimaradiene synthase pbcA performs the 2 cyclization steps that convert GGPP to ent-pimara-8(14),15-diene. The putative roles of the remaining cluster enzymes in ent-pimara-8(14),15-diene biosynthesis is unclear. The cytochrome P450 monooxygenase AN1598, the glutathione S-transferase AN1595, the oxidoreductases AN1596 and AN1597 probably function as decorative enzymes. It is possible that in biological conditions the compound is oxidized to ent-pimara-8(14),15-dien-19-oic acid, which is a bioactive diterpene compound predominant in many plant extracts. The polypeptide is Geranylgeranyl pyrophosphate synthase AN1592 (Emericella nidulans (strain FGSC A4 / ATCC 38163 / CBS 112.46 / NRRL 194 / M139) (Aspergillus nidulans)).